Reading from the N-terminus, the 472-residue chain is Ras-GEF domain-containing family member 1B (472 aa).

One can recognise an N-terminal Ras-GEF domain in the interval 34–164 (QDNNLLSGSL…IIQNLIRKLA (131 aa)). The region spanning 204-452 (DPYTVAQQLT…YLASYESEGP (249 aa)) is the Ras-GEF domain.

In terms of biological role, guanine nucleotide exchange factor (GEF) with specificity for rap2a and other Ras family proteins (in vitro). The protein is Ras-GEF domain-containing family member 1B (rasgef1b) of Xenopus tropicalis (Western clawed frog).